The sequence spans 73 residues: uncharacterized protein (73 aa).

2 consecutive transmembrane segments (helical) span residues 4–24 (LIPV…SPCV) and 51–71 (AGAI…IIAL).

The protein resides in the cell membrane. This is an uncharacterized protein from Escherichia coli O157:H7.